The following is a 1010-amino-acid chain: Sodium/potassium-transporting ATPase subunit alpha-3 (1010 aa).

A disordered region spans residues 1-21 (MGDKDDRFPKKKKGGTKDMDA). Residues 1 to 74 (MGDKDDRFPK…NALTPPPTTP (74 aa)) lie on the Cytoplasmic side of the membrane. Residues 69–71 (PPP) form an interaction with phosphoinositide-3 kinase region. Residues 75 to 95 (EWVKFCRQLFGGFSILLWTGA) traverse the membrane as a helical segment. Over 96–118 (ILCFLAYAIQAATEDEPAGDNLY) the chain is Extracellular. Residues 119–139 (LGIVLTAVVVITGCFSYFQEA) form a helical membrane-spanning segment. Residues 140–275 (KSSKIMESFK…TGKTPIAVEI (136 aa)) lie on the Cytoplasmic side of the membrane. The span at 201–216 (DNSSLTGESEPQSRSP) shows a compositional bias: polar residues. The interval 201–221 (DNSSLTGESEPQSRSPDCTHD) is disordered. A helical transmembrane segment spans residues 276–295 (EHFIHIITGVAVFLGVTFFI). At 296–307 (LAIILGYTWLKA) the chain is on the extracellular side. Residues 308–325 (VIFLIGIIVANVPEGLLA) traverse the membrane as a helical segment. Residues 326-759 (TVTVCLTLTA…EEGRLIFDNL (434 aa)) lie on the Cytoplasmic side of the membrane. Asp-363 serves as the catalytic 4-aspartylphosphate intermediate. The Mg(2+) site is built by Asp-704 and Asp-708. Residues 760–779 (KKSIAYTLTSNIPEITPFLF) traverse the membrane as a helical segment. At 780–789 (FIIVNIPLAL) the chain is on the extracellular side. Residues 790 to 810 (GTITILCIDLGTDMGSAISLA) form a helical membrane-spanning segment. Topologically, residues 811–830 (YETAESDIMKRQPRNPCRDK) are cytoplasmic. The chain crosses the membrane as a helical span at residues 831–853 (LVNERLISIAYGQIGMIQALGGF). The Extracellular segment spans residues 854–905 (FSYFVILAENGFLPSQLVGIRLNWDDRSLNDLEDSYGQQWTYEQRKIVEFTC). Residues 906 to 925 (HTAFFVSIVVVQWADLIICK) form a helical membrane-spanning segment. Residues 926-938 (TRRNSVFQQGMKN) lie on the Cytoplasmic side of the membrane. Position 930 is a phosphoserine; by PKA (Ser-930). A helical membrane pass occupies residues 939–957 (KILIFGLFEETALAAFLSY). Over 958 to 972 (CPGMDVALRMYPLKP) the chain is Extracellular. A helical membrane pass occupies residues 973 to 993 (TWWFWAFPYSFLIFVYDEARK). Topologically, residues 994 to 1010 (LILCRNPGGWVEKETYY) are cytoplasmic.

This sequence belongs to the cation transport ATPase (P-type) (TC 3.A.3) family. Type IIC subfamily. The sodium/potassium-transporting ATPase is composed of a catalytic alpha subunit, an auxiliary non-catalytic beta subunit and an additional regulatory subunit.

Its subcellular location is the cell membrane. It catalyses the reaction K(+)(out) + Na(+)(in) + ATP + H2O = K(+)(in) + Na(+)(out) + ADP + phosphate + H(+). In terms of biological role, this is the catalytic component of the active enzyme, which catalyzes the hydrolysis of ATP coupled with the exchange of sodium and potassium ions across the plasma membrane. This action creates the electrochemical gradient of sodium and potassium ions, providing the energy for active transport of various nutrients. This chain is Sodium/potassium-transporting ATPase subunit alpha-3 (atp1a3), found in Oreochromis mossambicus (Mozambique tilapia).